Here is a 140-residue protein sequence, read N- to C-terminus: ATP synthase epsilon chain (140 aa).

The protein belongs to the ATPase epsilon chain family. As to quaternary structure, F-type ATPases have 2 components, CF(1) - the catalytic core - and CF(0) - the membrane proton channel. CF(1) has five subunits: alpha(3), beta(3), gamma(1), delta(1), epsilon(1). CF(0) has three main subunits: a, b and c.

The protein localises to the cell inner membrane. Functionally, produces ATP from ADP in the presence of a proton gradient across the membrane. In Xanthomonas oryzae pv. oryzae (strain PXO99A), this protein is ATP synthase epsilon chain.